We begin with the raw amino-acid sequence, 394 residues long: Elongation factor Tu (394 aa).

In terms of domain architecture, tr-type G spans 10–204 (KAHVNIGTIG…SVDSYIPTPT (195 aa)). The tract at residues 19–26 (GHIDHGKT) is G1. A GTP-binding site is contributed by 19-26 (GHIDHGKT). Mg(2+) is bound at residue Thr26. The interval 60 to 64 (GITIN) is G2. Positions 81–84 (DCPG) are G3. GTP is bound by residues 81-85 (DCPGH) and 136-139 (NKCD). A G4 region spans residues 136–139 (NKCD). The G5 stretch occupies residues 174–176 (SAL).

Belongs to the TRAFAC class translation factor GTPase superfamily. Classic translation factor GTPase family. EF-Tu/EF-1A subfamily. In terms of assembly, monomer.

The protein resides in the cytoplasm. It catalyses the reaction GTP + H2O = GDP + phosphate + H(+). GTP hydrolase that promotes the GTP-dependent binding of aminoacyl-tRNA to the A-site of ribosomes during protein biosynthesis. This chain is Elongation factor Tu, found in Malacoplasma penetrans (strain HF-2) (Mycoplasma penetrans).